The sequence spans 358 residues: Cytoplasmic dynein 2 light intermediate chain 1 (358 aa).

Disordered regions lie at residues 1–35 (MPKV…EDAH) and 307–358 (ESTR…ALDP). A compositionally biased stretch (acidic residues) spans 24–33 (TDEEEAEEED). Composition is skewed to basic and acidic residues over residues 307 to 320 (ESTR…DPVK) and 333 to 349 (RAQK…EQAK).

It belongs to the dynein light intermediate chain family. In terms of assembly, light intermediate chain of the cytoplasmic dynein complex 2, a multisubunit complex composed at least of eleven different proteins. The cytoplasmic dynein 2 complex consists of two catalytic heavy chains (HCs) and a number of non-catalytic subunits presented by intermediate chains (ICs), light intermediate chains (LICs) and light chains (LCs). Among them, a heavy chain (DYNC2H1), two intermediate chains (DYNC2I2 and DYNC2I1), a light intermediate chain (DYNC2LI1), and a light chain (DYNLT2B) are unique to the dynein-2 complex, but a subset of light chains are also shared by dynein-1 and dynein-2 complexes. Dynein-2 complex is built around two copies of cytoplasmic dynein 2 heavy chain 1 (DYNC2H1). The C-terminal region forms the motor domain, which converts the energy from ATP hydrolysis into movement. Its N-terminal region forms the tail, an extended structure that binds the other subunits and holds the two heavy chains in a homodimer.

Its subcellular location is the cytoplasm. It is found in the cell projection. It localises to the cilium. The protein localises to the cytoskeleton. The protein resides in the cilium basal body. Its subcellular location is the cilium axoneme. It is found in the microtubule organizing center. It localises to the centrosome. Acts as one of several non-catalytic accessory components of the cytoplasmic dynein 2 complex (dynein-2 complex), a motor protein complex that drives the movement of cargos along microtubules within cilia and flagella in concert with the intraflagellar transport (IFT) system, facilitating the assembly of these organelles. The protein is Cytoplasmic dynein 2 light intermediate chain 1 (dync2li1) of Danio rerio (Zebrafish).